We begin with the raw amino-acid sequence, 462 residues long: Argininosuccinate lyase (462 aa).

It belongs to the lyase 1 family. Argininosuccinate lyase subfamily.

The protein resides in the cytoplasm. It carries out the reaction 2-(N(omega)-L-arginino)succinate = fumarate + L-arginine. Its pathway is amino-acid biosynthesis; L-arginine biosynthesis; L-arginine from L-ornithine and carbamoyl phosphate: step 3/3. In Bacillus thuringiensis (strain Al Hakam), this protein is Argininosuccinate lyase.